The following is a 300-amino-acid chain: Bifunctional protein FolD (300 aa).

NADP(+)-binding positions include 168–170 (GRS), S193, and I234.

The protein belongs to the tetrahydrofolate dehydrogenase/cyclohydrolase family. As to quaternary structure, homodimer.

It catalyses the reaction (6R)-5,10-methylene-5,6,7,8-tetrahydrofolate + NADP(+) = (6R)-5,10-methenyltetrahydrofolate + NADPH. The enzyme catalyses (6R)-5,10-methenyltetrahydrofolate + H2O = (6R)-10-formyltetrahydrofolate + H(+). Its pathway is one-carbon metabolism; tetrahydrofolate interconversion. Its function is as follows. Catalyzes the oxidation of 5,10-methylenetetrahydrofolate to 5,10-methenyltetrahydrofolate and then the hydrolysis of 5,10-methenyltetrahydrofolate to 10-formyltetrahydrofolate. The polypeptide is Bifunctional protein FolD (Ehrlichia canis (strain Jake)).